Reading from the N-terminus, the 202-residue chain is Stress enhanced protein 2, chloroplastic (202 aa).

A chloroplast-targeting transit peptide spans 1–60 (MAMATRAIRYQLPSPRFRAPRCESSEPIKQIQIQQRPRGGDLAENGKIVLQPRLCTLRSY). 2 consecutive transmembrane segments (helical) span residues 111 to 131 (LAMI…NSLF) and 142 to 162 (AIGA…LTIS).

It belongs to the ELIP/psbS family.

It localises to the plastid. The protein localises to the chloroplast thylakoid membrane. Its function is as follows. May be involved in non-photochemical quenching, a process that maintains the balance between dissipation and utilization of light energy to minimize generation of oxidizing molecules, thereby protecting the plant against photo-oxidative damage. May play a photoprotective role in the thylakoid membrane in response to light stress. In Arabidopsis thaliana (Mouse-ear cress), this protein is Stress enhanced protein 2, chloroplastic.